A 391-amino-acid polypeptide reads, in one-letter code: Putative neutrophil cytosol factor 1B (391 aa).

The PX domain maps to 1 to 126 (MGDTFIRHIA…DFFKVRPDDL (126 aa)). SH3 domains follow at residues 157 to 216 (IILQ…PLDS) and 227 to 286 (YAGE…KSGQ). The disordered stretch occupies residues 286 to 391 (QDVSQAQRQI…STKRKLASAV (106 aa)). A phosphoserine mark is found at serine 304 and serine 305. Residues 310–319 (HSIHQRSRKR) are compositionally biased toward basic residues. A phosphoserine mark is found at serine 321, serine 329, serine 346, and serine 349.

The protein resides in the cytoplasm. Functionally, may be required for activation of the latent NADPH oxidase (necessary for superoxide production). This Homo sapiens (Human) protein is Putative neutrophil cytosol factor 1B (NCF1B).